The primary structure comprises 147 residues: Large ribosomal subunit protein uL15 (147 aa).

Residues 20 to 54 (GRGIGSGKGKTSGKGHKGQKARGTGKVHPWFEGGQ) form a disordered region. Residues 30–44 (TSGKGHKGQKARGTG) show a composition bias toward basic residues.

It belongs to the universal ribosomal protein uL15 family. In terms of assembly, part of the 50S ribosomal subunit.

Functionally, binds to the 23S rRNA. The polypeptide is Large ribosomal subunit protein uL15 (Thermosipho africanus (strain TCF52B)).